Consider the following 594-residue polypeptide: Acyl-coenzyme A thioesterase 11 (594 aa).

The N-terminal 20 residues, methionine 1–arginine 20, are a transit peptide targeting the mitochondrion. Phosphoserine occurs at positions 15 and 25. The segment at arginine 20–tyrosine 43 is disordered. Residues asparagine 45–leucine 157 form the HotDog ACOT-type 1 domain. Residues threonine 93–serine 95, asparagine 122–serine 124, arginine 183, and histidine 272–arginine 274 contribute to the CoA site. Residues glutamate 217–aspartate 330 form the HotDog ACOT-type 2 domain. The region spanning lysine 370 to aspartate 582 is the START domain.

Its subcellular location is the mitochondrion matrix. It localises to the cytoplasm. It catalyses the reaction hexadecanoyl-CoA + H2O = hexadecanoate + CoA + H(+). It carries out the reaction tetradecanoyl-CoA + H2O = tetradecanoate + CoA + H(+). The enzyme catalyses dodecanoyl-CoA + H2O = dodecanoate + CoA + H(+). The catalysed reaction is butanoyl-CoA + H2O = butanoate + CoA + H(+). The protein operates within lipid metabolism; fatty acid metabolism. In terms of biological role, has an acyl-CoA thioesterase activity with a preference for the long chain fatty acyl-CoA thioesters hexadecanoyl-CoA/palmitoyl-CoA and tetradecanoyl-CoA/myristoyl-CoA which are the main substrates in the mitochondrial beta-oxidation pathway. The sequence is that of Acyl-coenzyme A thioesterase 11 (Acot11) from Mus musculus (Mouse).